We begin with the raw amino-acid sequence, 128 residues long: Nascent polypeptide-associated complex protein (128 aa).

The region spanning 8 to 75 is the NAC-A/B domain; it reads PRMLKKMQKM…PKKIKKEKVE (68 aa).

This sequence belongs to the NAC-alpha family. In terms of assembly, homodimer. Interacts with the ribosome. Binds ribosomal RNA.

Functionally, contacts the emerging nascent chain on the ribosome. The chain is Nascent polypeptide-associated complex protein from Methanocaldococcus jannaschii (strain ATCC 43067 / DSM 2661 / JAL-1 / JCM 10045 / NBRC 100440) (Methanococcus jannaschii).